A 383-amino-acid polypeptide reads, in one-letter code: UDP-N-acetylenolpyruvoylglucosamine reductase (383 aa).

The FAD-binding PCMH-type domain occupies 42–212 (LSCQAMQLIT…TRVGFKLHKD (171 aa)). Residue Arg189 is part of the active site. The Proton donor role is filled by Ser267. Residue Glu369 is part of the active site.

The protein belongs to the MurB family. FAD serves as cofactor.

Its subcellular location is the cytoplasm. It catalyses the reaction UDP-N-acetyl-alpha-D-muramate + NADP(+) = UDP-N-acetyl-3-O-(1-carboxyvinyl)-alpha-D-glucosamine + NADPH + H(+). Its pathway is cell wall biogenesis; peptidoglycan biosynthesis. Functionally, cell wall formation. In Psychrobacter sp. (strain PRwf-1), this protein is UDP-N-acetylenolpyruvoylglucosamine reductase.